The chain runs to 711 residues: Nuclear intron maturase 1, mitochondrial (711 aa).

A Reverse transcriptase domain is found at 147 to 459 (KDKISMNGGE…RGIQFLDHII (313 aa)). Positions 484–653 (GTLLSVSASL…QVLQEYIRLQ (170 aa)) are intron maturase type-2.

This sequence belongs to the plant nuclear intron maturase (nMat) family. In terms of tissue distribution, expressed at low levels in seedlings and accumulates in adult plants.

The protein localises to the mitochondrion. Functionally, nuclear-encoded maturase required for splicing of group-II introns in mitochondria. Necessary for mitochondrial biogenesis during early developmental stages. Involved in the splicing of mitochondrial NAD4 transcripts. Required for trans-splicing of NAD1 intron 1 and also functions in cis-splicing of NAD2 intron 1 and NAD4 intron 2. Required for the regulation of fundamental metabolic pathways such as amino acid metabolism, triacylglycerol degradation and polysaccharide synthesis (cellulose and starch) during the early stage of plant growth. Implicated in stress responses. The protein is Nuclear intron maturase 1, mitochondrial of Arabidopsis thaliana (Mouse-ear cress).